The chain runs to 412 residues: Multidrug resistance protein MdtG (412 aa).

11 helical membrane passes run 19–39 (LGCF…PLYV), 56–76 (LVFS…GGLA), 90–110 (LGMS…QFLL), 113–133 (ALLG…ATQI), 144–164 (TLST…GFLA), 171–191 (TVFF…LFLI), 222–242 (LFVT…ILTL), 254–274 (IAFI…MSAP), 288–308 (ILIV…FVQT), 317–337 (FLLG…LVYN), and 376–396 (AVFL…TLSL).

It belongs to the major facilitator superfamily. DHA1 family. MdtG (TC 2.A.1.2.20) subfamily.

The protein localises to the cell inner membrane. The sequence is that of Multidrug resistance protein MdtG from Klebsiella pneumoniae (strain 342).